A 535-amino-acid polypeptide reads, in one-letter code: CTP synthase (535 aa).

Residues 1–267 (MTKYIFVTGG…DQIVCDHLKL (267 aa)) form an amidoligase domain region. Ser-13 lines the CTP pocket. Ser-13 is a binding site for UTP. 14-19 (SLGKGI) provides a ligand contact to ATP. Residue Tyr-54 participates in L-glutamine binding. Asp-71 contacts ATP. Mg(2+) contacts are provided by Asp-71 and Glu-141. CTP contacts are provided by residues 148-150 (DIE), 188-193 (KTKPTQ), and Lys-224. UTP is bound by residues 188–193 (KTKPTQ) and Lys-224. 240-242 (RDA) provides a ligand contact to ATP. Residues 292 to 534 (KIALVGKYVE…VRASITNKES (243 aa)) enclose the Glutamine amidotransferase type-1 domain. Residue Gly-354 coordinates L-glutamine. Residue Cys-381 is the Nucleophile; for glutamine hydrolysis of the active site. Residues 382–385 (LGMQ), Glu-405, and Arg-462 contribute to the L-glutamine site. Residues His-507 and Glu-509 contribute to the active site.

It belongs to the CTP synthase family. In terms of assembly, homotetramer.

The catalysed reaction is UTP + L-glutamine + ATP + H2O = CTP + L-glutamate + ADP + phosphate + 2 H(+). The enzyme catalyses L-glutamine + H2O = L-glutamate + NH4(+). It catalyses the reaction UTP + NH4(+) + ATP = CTP + ADP + phosphate + 2 H(+). It functions in the pathway pyrimidine metabolism; CTP biosynthesis via de novo pathway; CTP from UDP: step 2/2. Its activity is regulated as follows. Allosterically activated by GTP, when glutamine is the substrate; GTP has no effect on the reaction when ammonia is the substrate. The allosteric effector GTP functions by stabilizing the protein conformation that binds the tetrahedral intermediate(s) formed during glutamine hydrolysis. Inhibited by the product CTP, via allosteric rather than competitive inhibition. In terms of biological role, catalyzes the ATP-dependent amination of UTP to CTP with either L-glutamine or ammonia as the source of nitrogen. Regulates intracellular CTP levels through interactions with the four ribonucleotide triphosphates. The polypeptide is CTP synthase (Bacillus cereus (strain AH187)).